Here is a 387-residue protein sequence, read N- to C-terminus: Gamma-butyrobetaine dioxygenase (387 aa).

Zn(2+) is bound by residues Cys38, Cys40, Cys43, and His82. Positions 202, 204, and 347 each coordinate Fe cation. A Phosphoserine modification is found at Ser351.

Belongs to the gamma-BBH/TMLD family. The cofactor is Fe(2+). Requires L-ascorbate as cofactor.

It is found in the cytoplasm. It carries out the reaction 4-(trimethylamino)butanoate + 2-oxoglutarate + O2 = carnitine + succinate + CO2. Its pathway is amine and polyamine biosynthesis; carnitine biosynthesis. Its function is as follows. Catalyzes the formation of L-carnitine from gamma-butyrobetaine. The polypeptide is Gamma-butyrobetaine dioxygenase (BBOX1) (Pongo abelii (Sumatran orangutan)).